We begin with the raw amino-acid sequence, 228 residues long: Ribose-5-phosphate isomerase A (228 aa).

Substrate-binding positions include 32–35, 85–88, and 98–101; these read TGST, DGAD, and KGGG. The active-site Proton acceptor is glutamate 107. Substrate is bound at residue lysine 125.

The protein belongs to the ribose 5-phosphate isomerase family. Homodimer.

The catalysed reaction is aldehydo-D-ribose 5-phosphate = D-ribulose 5-phosphate. The protein operates within carbohydrate degradation; pentose phosphate pathway; D-ribose 5-phosphate from D-ribulose 5-phosphate (non-oxidative stage): step 1/1. Its function is as follows. Catalyzes the reversible conversion of ribose-5-phosphate to ribulose 5-phosphate. The polypeptide is Ribose-5-phosphate isomerase A (Cupriavidus necator (strain ATCC 17699 / DSM 428 / KCTC 22496 / NCIMB 10442 / H16 / Stanier 337) (Ralstonia eutropha)).